A 511-amino-acid chain; its full sequence is Pancreatic alpha-amylase (511 aa).

A signal peptide spans 1 to 15; sequence MKLFLLLSAFGFCWA. At Gln16 the chain carries Pyrrolidone carboxylic acid. 3 disulfides stabilise this stretch: Cys43–Cys101, Cys85–Cys130, and Cys156–Cys175. Residues Asn115, Arg173, and Asp182 each coordinate Ca(2+). Residue Arg210 coordinates chloride. Asp212 (nucleophile) is an active-site residue. His216 is a binding site for Ca(2+). Residue Glu248 is the Proton donor of the active site. Chloride-binding residues include Asn313 and Arg352. Residues Cys393 and Cys399 are joined by a disulfide bond. N-linked (GlcNAc...) asparagine glycosylation occurs at Asn427. A disulfide bond links Cys465 and Cys477.

This sequence belongs to the glycosyl hydrolase 13 family. As to quaternary structure, binds to the sea anemone inhibitor helianthamide and magnificamide. Ca(2+) is required as a cofactor. Requires chloride as cofactor.

It is found in the secreted. The protein resides in the extracellular space. The enzyme catalyses Endohydrolysis of (1-&gt;4)-alpha-D-glucosidic linkages in polysaccharides containing three or more (1-&gt;4)-alpha-linked D-glucose units.. This is Pancreatic alpha-amylase (AMY2) from Sus scrofa (Pig).